We begin with the raw amino-acid sequence, 167 residues long: Small ribosomal subunit protein uS5 (167 aa).

In terms of domain architecture, S5 DRBM spans 12–75 (LEDQVVSINR…DAAKKSLIEV (64 aa)).

Belongs to the universal ribosomal protein uS5 family. In terms of assembly, part of the 30S ribosomal subunit. Contacts proteins S4 and S8.

Its function is as follows. With S4 and S12 plays an important role in translational accuracy. Located at the back of the 30S subunit body where it stabilizes the conformation of the head with respect to the body. The chain is Small ribosomal subunit protein uS5 from Lacticaseibacillus paracasei (strain ATCC 334 / BCRC 17002 / CCUG 31169 / CIP 107868 / KCTC 3260 / NRRL B-441) (Lactobacillus paracasei).